The following is a 909-amino-acid chain: ABC transporter A family member 10 (909 aa).

Helical transmembrane passes span V35–V55, I320–I340, F374–L394, F406–I426, A433–G453, G465–A485, and L507–L527. S555 carries the phosphoserine modification. The region spanning I587–T824 is the ABC transporter domain. G625–T632 provides a ligand contact to ATP.

It belongs to the ABC transporter superfamily. ABCA family. CPR flippase (TC 3.A.1.211) subfamily.

The protein resides in the membrane. This chain is ABC transporter A family member 10 (ABCA10), found in Arabidopsis thaliana (Mouse-ear cress).